Consider the following 300-residue polypeptide: D-alanine--D-alanine ligase (300 aa).

The ATP-grasp domain maps to 99–293 (KKILKYANIN…FAELLNSIVK (195 aa)). 126–181 (IEKIGYPVFVKPNSGGSSVATNLVKDKEGIKEAVELALKYDKEVMIENYTKGEEIT) lines the ATP pocket. Positions 248, 260, and 262 each coordinate Mg(2+).

Belongs to the D-alanine--D-alanine ligase family. It depends on Mg(2+) as a cofactor. The cofactor is Mn(2+).

Its subcellular location is the cytoplasm. The enzyme catalyses 2 D-alanine + ATP = D-alanyl-D-alanine + ADP + phosphate + H(+). It participates in cell wall biogenesis; peptidoglycan biosynthesis. Cell wall formation. In Clostridium botulinum (strain Okra / Type B1), this protein is D-alanine--D-alanine ligase.